The sequence spans 153 residues: Nucleoside diphosphate kinase (153 aa).

Residues lysine 11, phenylalanine 59, arginine 87, threonine 93, arginine 104, and asparagine 114 each contribute to the ATP site. The Pros-phosphohistidine intermediate role is filled by histidine 117.

It belongs to the NDK family. Homotrimer. Mg(2+) is required as a cofactor.

It catalyses the reaction a 2'-deoxyribonucleoside 5'-diphosphate + ATP = a 2'-deoxyribonucleoside 5'-triphosphate + ADP. It carries out the reaction a ribonucleoside 5'-diphosphate + ATP = a ribonucleoside 5'-triphosphate + ADP. In terms of biological role, major role in the synthesis of nucleoside triphosphates other than ATP. The ATP gamma phosphate is transferred to the NDP beta phosphate via a ping-pong mechanism, using a phosphorylated active-site intermediate. The polypeptide is Nucleoside diphosphate kinase (ndk1) (Aspergillus fumigatus (strain ATCC MYA-4609 / CBS 101355 / FGSC A1100 / Af293) (Neosartorya fumigata)).